Reading from the N-terminus, the 301-residue chain is Putative S-adenosyl-L-methionine-dependent methyltransferase Mflv_5024 (301 aa).

Residues Asp-129 and 158–159 contribute to the S-adenosyl-L-methionine site; that span reads DL.

The protein belongs to the UPF0677 family.

In terms of biological role, exhibits S-adenosyl-L-methionine-dependent methyltransferase activity. The chain is Putative S-adenosyl-L-methionine-dependent methyltransferase Mflv_5024 from Mycolicibacterium gilvum (strain PYR-GCK) (Mycobacterium gilvum (strain PYR-GCK)).